Here is an 84-residue protein sequence, read N- to C-terminus: Conophysin-R (84 aa).

Intrachain disulfides connect Cys-6/Cys-46, Cys-9/Cys-20, Cys-14/Cys-36, Cys-21/Cys-26, Cys-53/Cys-71, Cys-65/Cys-83, and Cys-72/Cys-77.

As to expression, expressed by the venom duct.

It localises to the secreted. In terms of biological role, targets vasopressin-oxytocin related receptors. No effect observed when injected into goldfish or into mice. The protein is Conophysin-R of Conus radiatus (Rayed cone).